A 548-amino-acid polypeptide reads, in one-letter code: Acetamidase (548 aa).

Residues K129 and S204 each act as charge relay system in the active site. The active-site Acyl-ester intermediate is S228.

It belongs to the amidase family.

The catalysed reaction is a monocarboxylic acid amide + H2O = a monocarboxylate + NH4(+). The enzyme catalyses acetamide + H2O = acetate + NH4(+). Its function is as follows. Allows acetamide to be used as a sole carbon or nitrogen source. The polypeptide is Acetamidase (amdS) (Emericella nidulans (strain FGSC A4 / ATCC 38163 / CBS 112.46 / NRRL 194 / M139) (Aspergillus nidulans)).